The following is a 457-amino-acid chain: Methylenetetrahydrofolate--tRNA-(uracil-5-)-methyltransferase TrmFO (457 aa).

7–12 is an FAD binding site; sequence GAGLAG. The tract at residues 38 to 58 is disordered; that stretch reads FTSRQDEKTGTHDVRNATQTR. Residues 40–52 are compositionally biased toward basic and acidic residues; sequence SRQDEKTGTHDVR.

It belongs to the MnmG family. TrmFO subfamily. FAD serves as cofactor.

It localises to the cytoplasm. The catalysed reaction is uridine(54) in tRNA + (6R)-5,10-methylene-5,6,7,8-tetrahydrofolate + NADH + H(+) = 5-methyluridine(54) in tRNA + (6S)-5,6,7,8-tetrahydrofolate + NAD(+). It catalyses the reaction uridine(54) in tRNA + (6R)-5,10-methylene-5,6,7,8-tetrahydrofolate + NADPH + H(+) = 5-methyluridine(54) in tRNA + (6S)-5,6,7,8-tetrahydrofolate + NADP(+). Its function is as follows. Catalyzes the folate-dependent formation of 5-methyl-uridine at position 54 (M-5-U54) in all tRNAs. The protein is Methylenetetrahydrofolate--tRNA-(uracil-5-)-methyltransferase TrmFO of Hydrogenobaculum sp. (strain Y04AAS1).